Here is a 460-residue protein sequence, read N- to C-terminus: MYGKIEKIHFVGIGGIGMSGIAEVLLNLGYKVSGSDLRGSDITERLARLGAEIGIGHKADNLKDVDVVVISSAVHDDNPEVVEAKRLHVPVIPRAEMLAELMRMKFGIAIAGTHGKTTTTSMAASILGHAGIDPTIVIGGKLNAIGTNAQLGQGKFLLAEADESDGSFLVLSPTIAVVTNIDADHLDHYSGGIEEIKDTFVKFINKVPFYGMAVLCLDDPNIRAILPRVKKRYMTYGLSSQADIRATHVRHDGFTTSFTAHFKGYRLGEISFTMPGAHNVLNAMACIAVALELDVPFSAIQEGFSRFGGVGRRFTIKGEPRGITVVDDYGHHPAEIKATLAAARLGWPERRIVAVFQPHRYTRTHELFGEFVTAFYDADVLILTDVYAAGEQPVEGATAERLSQEILRHGQKDVTWIPNRELIPQHLLGIVKEGDMVITLGAGSIWQQGEALVTLLEKTS.

112 to 118 provides a ligand contact to ATP; the sequence is GTHGKTT.

The protein belongs to the MurCDEF family.

The protein resides in the cytoplasm. The catalysed reaction is UDP-N-acetyl-alpha-D-muramate + L-alanine + ATP = UDP-N-acetyl-alpha-D-muramoyl-L-alanine + ADP + phosphate + H(+). It participates in cell wall biogenesis; peptidoglycan biosynthesis. Its function is as follows. Cell wall formation. This Pelobacter propionicus (strain DSM 2379 / NBRC 103807 / OttBd1) protein is UDP-N-acetylmuramate--L-alanine ligase.